The primary structure comprises 441 residues: Heat shock factor protein 4 (441 aa).

A DNA-binding region spans residues 17 to 121 (NVPAFLTKLW…EHLLEHIKRK (105 aa)). The tract at residues 130–205 (TKVRQEDLSK…QMQSNSPSTV (76 aa)) is hydrophobic repeat HR-A/B.

This sequence belongs to the HSF family. In terms of tissue distribution, predominantly expressed in the eye.

It localises to the nucleus. Its function is as follows. Heat-shock transcription factor that specifically binds heat shock promoter elements (HSE). Required for denucleation and organelle rupture and degradation that occur during eye lens terminal differentiation, when fiber cells that compose the lens degrade all membrane-bound organelles in order to provide lens with transparency to allow the passage of light. In this process, may regulate denucleation of lens fiber cells in part by activating dnase1l1l and dnase2b transcription. May be involved in DNA repair through the transcriptional regulation of rad51. May up-regulate TP53 protein in lens fiber cells, possibly through protein stabilization. In the eye lens, controls the expression of alpha-crystallin B chain/CRYAB and consequently may be involved in the regulation of lysosomal acidification. This is Heat shock factor protein 4 from Danio rerio (Zebrafish).